The following is a 713-amino-acid chain: Protein tyrosine phosphatase domain-containing protein 1 (713 aa).

Residues 80–251 form the Tyrosine-protein phosphatase domain; sequence YSSWITDHLL…LVPLRSVFSC (172 aa). Cys188 serves as the catalytic Phosphocysteine intermediate.

This sequence belongs to the protein-tyrosine phosphatase family. Non-receptor class PTPDC1 subfamily.

Its function is as follows. May play roles in cilia formation and/or maintenance. This chain is Protein tyrosine phosphatase domain-containing protein 1 (ptpdc1), found in Danio rerio (Zebrafish).